Reading from the N-terminus, the 142-residue chain is Small ribosomal subunit protein uS9 (142 aa).

The protein belongs to the universal ribosomal protein uS9 family.

The sequence is that of Small ribosomal subunit protein uS9 (RPS16) from Debaryomyces hansenii (strain ATCC 36239 / CBS 767 / BCRC 21394 / JCM 1990 / NBRC 0083 / IGC 2968) (Yeast).